The chain runs to 159 residues: Phosphopantetheine adenylyltransferase (159 aa).

Residue His-16 participates in ATP binding. Positions 40, 72, and 86 each coordinate substrate. ATP-binding positions include 87–89 (GLR), Glu-97, and 122–128 (YQYLSAS).

This sequence belongs to the bacterial CoaD family. In terms of assembly, homohexamer. Requires Mg(2+) as cofactor.

It is found in the cytoplasm. The catalysed reaction is (R)-4'-phosphopantetheine + ATP + H(+) = 3'-dephospho-CoA + diphosphate. It functions in the pathway cofactor biosynthesis; coenzyme A biosynthesis; CoA from (R)-pantothenate: step 4/5. In terms of biological role, reversibly transfers an adenylyl group from ATP to 4'-phosphopantetheine, yielding dephospho-CoA (dPCoA) and pyrophosphate. The chain is Phosphopantetheine adenylyltransferase from Dehalococcoides mccartyi (strain CBDB1).